The sequence spans 185 residues: MVNSCCGSVCSDQGCGQDLCQETCCCPSCCQTTCCRTTCYRPSYSVSCCCRPQCCQSVCCQPTCCRPSCCVSSCCKPQCCQSVCCQPTCCHPSCCISSCCRPSCCVSSCCKPQCCQSVCCQPNCCRPSCSISSCCRPSCCESSCCRPCCCLRPVCGRVSCHTTCYRPACVISTCPRPVCCASSCC.

25 tandem repeats follow at residues 14 to 18 (GCGQD), 19 to 23 (LCQET), 24 to 28 (CCCPS), 39 to 43 (CYRPS), 44 to 48 (YSVSC), 49 to 53 (CCRPQ), 54 to 58 (CCQSV), 59 to 63 (CCQPT), 64 to 68 (CCRPS), 69 to 73 (CCVSS), 74 to 78 (CCKPQ), 79 to 83 (CCQSV), 84 to 88 (CCQPT), 89 to 93 (CCHPS), 94 to 98 (CCISS), 99 to 103 (CCRPS), 104 to 108 (CCVSS), 109 to 113 (CCKPQ), 114 to 118 (CCQSV), 119 to 123 (CCQPN), 124 to 128 (CCRPS), 134 to 138 (CCRPS), 139 to 143 (CCESS), 144 to 148 (CCRPC), and 149 to 164 (CCLR…HTTC). Positions 14–164 (GCGQDLCQET…CGRVSCHTTC (151 aa)) are 25 X 5 AA repeats of C-C-[IKRQVHEC]-[SPRT]-[STCVQPR].

It belongs to the KRTAP type 4 family. Interacts with hair keratins. As to expression, expressed in the hair follicles.

Its function is as follows. In the hair cortex, hair keratin intermediate filaments are embedded in an interfilamentous matrix, consisting of hair keratin-associated proteins (KRTAP), which are essential for the formation of a rigid and resistant hair shaft through their extensive disulfide bond cross-linking with abundant cysteine residues of hair keratins. The matrix proteins include the high-sulfur and high-glycine-tyrosine keratins. This Homo sapiens (Human) protein is Keratin-associated protein 4-8 (KRTAP4-8).